The primary structure comprises 499 residues: Probable cytochrome P450 cyp-35D1 (499 aa).

Position 444 (cysteine 444) interacts with heme.

It belongs to the cytochrome P450 family. Heme serves as cofactor. Expressed in hypodermis, intestine and vulva upon thiabendazole (TBZ) exposure.

Its function is as follows. Cytochromes P450 are a group of heme-thiolate monooxygenases. They oxidize a variety of structurally unrelated compounds, including steroids, fatty acids, and xenobiotics. Involved in the oxidative metabolism of thiabendazole (TBZ). Catalyzes the conversion of TBZ to its hydroxylated form. The chain is Probable cytochrome P450 cyp-35D1 from Caenorhabditis elegans.